A 2547-amino-acid polypeptide reads, in one-letter code: Piezo-type mechanosensitive ion channel component 1 (2547 aa).

The Cytoplasmic segment spans residues 1–12 (MEPHVLGAGLYW). A helical transmembrane segment spans residues 13 to 25 (LLLPCTLLAASLL). The Extracellular segment spans residues 26-28 (RFN). The helical transmembrane segment at 29–44 (ALSLVYLLFLLLLPWL) threads the bilayer. Residues 45–58 (PGPSRHSIPGHTGR) are Cytoplasmic-facing. Residues 59-81 (LLRALLCLSLLFLVAHLAFQICL) form a helical membrane-spanning segment. The Extracellular segment spans residues 82 to 121 (HTVPHLDQFLGQNGSLWVKVSQHIGVTRLDLKDIFNTTRL). Asn94 carries N-linked (GlcNAc...) asparagine glycosylation. A helical transmembrane segment spans residues 122–138 (VAPDLGVLLASSLCLGL). Residues 139 to 201 (CGRLTRKAGQ…ASRFRVTAHW (63 aa)) lie on the Cytoplasmic side of the membrane. Residues 202–221 (LLMTSGRTLVIVLLALAGIA) form a helical membrane-spanning segment. Residues 222 to 223 (HP) lie on the Extracellular side of the membrane. Residues 224-243 (SAFSSIYLVVFLAICTWWSC) traverse the membrane as a helical segment. Residues 244 to 254 (HFPLSPLGFNT) lie on the Cytoplasmic side of the membrane. A helical membrane pass occupies residues 255-275 (LCVMVSCFGAGHLICLYCYQT). Topologically, residues 276–316 (PFIQDMLPPGNIWARLFGLKNFVDLPNYSSPNALVLNTKHA) are extracellular. The chain crosses the membrane as a helical span at residues 317 to 337 (WPIYVSPGILLLLYYTATSLL). Residues 338 to 424 (KLHKSCPSEL…EMSPLHGLGH (87 aa)) are Cytoplasmic-facing. Residues 347-387 (LRKETPREDEEHELELDHLEPEPQARDATQGEMPMTTEPDL) are disordered. The span at 361-371 (ELDHLEPEPQA) shows a compositional bias: basic and acidic residues. A helical transmembrane segment spans residues 425-445 (LIMDQSYVCALIAMMVWSIMY). The Extracellular segment spans residues 446-447 (HS). A helical transmembrane segment spans residues 448–463 (WLTFVLLLWACLIWTV). The Cytoplasmic portion of the chain corresponds to 464–468 (RSRHQ). A helical membrane pass occupies residues 469-491 (LAMLCSPCILLYGLTLCCLRYVW). Topologically, residues 492–518 (AMELPELPTTLGPVSLHQLGLEHTRYP) are extracellular. A helical membrane pass occupies residues 519–536 (CLDLGAMLLYLLTFWLLL). At 537-580 (RQFVKEKLLKKQKVPAALLEVTVADTEPTQTQTLLRSLGELVTG) the chain is on the cytoplasmic side. The chain crosses the membrane as a helical span at residues 581–601 (IYVKYWIYVCAGMFIVVSFAG). Position 602 (Arg602) is a topological domain, extracellular. Residues 603 to 623 (LVVYKIVYMFLFLLCLTLFQV) traverse the membrane as a helical segment. Topologically, residues 624–633 (YYTLWRKLLR) are cytoplasmic. A helical membrane pass occupies residues 634–655 (VFWWLVVAYTMLVLIAVYTFQF). Topologically, residues 656–685 (QDFPTYWRNLTGFTDEQLGDLGLEQFSVSE) are extracellular. Residues 686 to 702 (LFSSILIPGFFLLACIL) traverse the membrane as a helical segment. At 703–811 (QLHYFHRPFM…RRLLELHVFK (109 aa)) the chain is on the cytoplasmic side. Position 758 is a phosphoserine (Ser758). Residues 812-823 (LVALYTVWVALK) form a helical membrane-spanning segment. Residues 824 to 826 (EVS) are Extracellular-facing. The chain crosses the membrane as a helical span at residues 827–840 (VMNLLLVVLWAFAL). Topologically, residues 841-854 (PYPRFRPMASCLST) are cytoplasmic. The chain crosses the membrane as a helical span at residues 855–869 (VWTCIIIVCKMLYQL). Over 870 to 921 (KIVNPHEYSSNCTEPFPNNTNLQPLEINQSLLYRGPVDPANWFGVRKGYPNL) the chain is Extracellular. Residues 922 to 949 (GYIQNHLQILLLLVFEAVVYRRQEHYRR) traverse the membrane as a helical segment. At 950-989 (QHQQAPLPAQAVCADGTRQRLDQDLLSCLKYFINFFFYKF) the chain is on the cytoplasmic side. The chain crosses the membrane as a helical span at residues 990-1005 (GLEICFLMAVNVIGQR). Over 1006 to 1007 (MN) the chain is Extracellular. The helical transmembrane segment at 1008-1023 (FMVILHGCWLVAILTR) threads the bilayer. Residues 1024 to 1036 (RRREAIARLWPNY) lie on the Cytoplasmic side of the membrane. A helical transmembrane segment spans residues 1037–1052 (CLFLTLFLLYQYLLCL). Residues 1053–1091 (GMPPALCIDYPWRWSKAIPMNSALIKWLYLPDFFRAPNS) lie on the Extracellular side of the membrane. Residues 1092-1113 (TNLISDFLLLLCASQQWQVFSA) traverse the membrane as a helical segment. Over 1114 to 1148 (ERTEEWQRMAGINTDHLEPLRGEPNPIPNFIHCRS) the chain is Cytoplasmic. Residues 1149–1175 (YLDMLKVAVFRYLFWLVLVVVFVAGAT) traverse the membrane as a helical segment. Residues 1176-1180 (RISIF) are Extracellular-facing. A helical transmembrane segment spans residues 1181-1199 (GLGYLLACFYLLLFGTTLL). The Cytoplasmic portion of the chain corresponds to 1200–1212 (QKDTRAQLVLWDC). The helical transmembrane segment at 1213 to 1231 (LILYNVTVIISKNMLSLLS) threads the bilayer. Residues 1232 to 1280 (CVFVEQMQSNFCWVIQLFSLVCTVKGYYDPKEMMTRDRDCLLPVEEAGI) lie on the Extracellular side of the membrane. Residues 1281 to 1297 (IWDSICFFFLLLQRRIF) traverse the membrane as a helical segment. At 1298–1656 (LSHYFLHVSA…ELLLDRRLHI (359 aa)) the chain is on the cytoplasmic side. Residues 1334-1365 (HRQIEEKSLAQLKRQMKRIRAKQEKYRQSQAS) are a coiled coil. 3 disordered regions span residues 1354 to 1396 (AKQE…RRQW), 1456 to 1480 (RRERARQERAEQLASGGDLNPDVEP), and 1567 to 1610 (TLSG…NTRS). Residues 1361–1372 (QSQASRGQLQSK) are compositionally biased toward polar residues. Residues 1376 to 1392 (DPSQEPGPDSPGGSSPP) show a composition bias toward low complexity. Residues Ser1385 and Ser1390 each carry the phosphoserine modification. The segment covering 1592–1610 (SSMTDDTSSPLSTGYNTRS) has biased composition (polar residues). A phosphoserine mark is found at Ser1627, Ser1631, and Ser1646. Residues 1657–1700 (PELEEAERFEAQQGRTLRLLRAGYQCVAAHSELLCYFIIILNHM) form a helical membrane-spanning segment. The Extracellular segment spans residues 1701–1704 (VTAS). The chain crosses the membrane as a helical span at residues 1705–1720 (AASLVLPVLVFLWAML). The Cytoplasmic portion of the chain corresponds to 1721–1728 (TIPRPSKR). The chain crosses the membrane as a helical span at residues 1729 to 1747 (FWMTAIVFTEVMVVTKYLF). The Extracellular portion of the chain corresponds to 1748-1779 (QFGFFPWNSYVVLRRYENKPYFPPRILGLEKT). The helical transmembrane segment at 1780-1801 (DSYIKYDLVQLMALFFHRSQLL) threads the bilayer. Over 1802–1976 (CYGLWDHEED…HTKYRAATDV (175 aa)) the chain is Cytoplasmic. 2 stretches are compositionally biased toward basic and acidic residues: residues 1816–1837 (DHCRSSVKDREAKEEPEAKLES) and 1855–1880 (PRDHIQGKGSIRSKDVIQDPPEDLKP). Residues 1816–1931 (DHCRSSVKDR…RPRHTQEKSK (116 aa)) are disordered. A compositionally biased stretch (basic residues) spans 1881 to 1894 (RHTRHISIRFRRRK). Positions 1912-1931 (GEGKETTERKRPRHTQEKSK) are enriched in basic and acidic residues. The chain crosses the membrane as a helical span at residues 1977–1996 (YALMFLADIVDIIIIIFGFW). The Extracellular portion of the chain corresponds to 1997 to 2016 (AFGKHSAATDIASSLSDDQV). The helical transmembrane segment at 2017-2033 (PQAFLFMLLVQFGTMVI) threads the bilayer. The Cytoplasmic segment spans residues 2034–2047 (DRALYLRKTVLGKL). A helical transmembrane segment spans residues 2048 to 2068 (AFQVVLVVAIHIWMFFILPAV). Over 2069 to 2076 (TERMFSQN) the chain is Extracellular. Residues 2077–2092 (AVAQLWYFVKCIYFAL) traverse the membrane as a helical segment. Residues 2093–2192 (SAYQIRCGYP…KKKIVKYGMG (100 aa)) are Cytoplasmic-facing. A helical transmembrane segment spans residues 2193 to 2213 (GLIILFLIAIIWFPLLFMSLI). The Extracellular portion of the chain corresponds to 2214–2457 (RSVVGVVNQP…IFSDKVSPPS (244 aa)). Cys2437 and Cys2441 are oxidised to a cystine. A helical membrane pass occupies residues 2458–2478 (LGFLAGYGIVGLYVSIVLVVG). Residues 2479–2547 (KFVRGFFSEI…TMIKWTRERE (69 aa)) are Cytoplasmic-facing.

Belongs to the PIEZO (TC 1.A.75) family. In terms of assembly, homotrimer; the homotrimer forms a propeller-shaped Piezo channel with a cation-ion conducting pore. Heterotrimeric interaction may occur between PIEZO1 and PIEZO2. Interacts with PKD2. Interacts with STOMl3. Interacts with TMC1, TMC2, PCDG15 and CIB2; the interaction may be part of the MET complex. Interacts with MDFIC (via C-terminus); the interaction prolongs Piezo channel inactivation. Interacts with MDFI (via C-terminus); the interaction prolongs Piezo channel inactivation. In terms of tissue distribution, expressed in bladder, colon, kidney and skin. Also expressed in bone marrow, liver, lung, spleen and erythrocytes (at protein level). Expressed in myoblasts (at protein level). Expressed in red blood cells. Expressed in cochlear inner and outer hair cells (IHCs and OHCs) and vestibular organ HCs.

It is found in the endoplasmic reticulum membrane. The protein resides in the endoplasmic reticulum-Golgi intermediate compartment membrane. Its subcellular location is the cell membrane. The protein localises to the cell projection. It localises to the lamellipodium membrane. It carries out the reaction K(+)(in) = K(+)(out). The enzyme catalyses Na(+)(in) = Na(+)(out). The catalysed reaction is Ca(2+)(in) = Ca(2+)(out). It catalyses the reaction Mg(2+)(in) = Mg(2+)(out). Its activity is regulated as follows. Regulated by auxillary subunits MDFIC and MDFI. Down-regulated by phosphatidylserines exposed on the cell surface. Divalent ions decrease the single-channel permeability of K(+). Pore-forming subunit of the mechanosensitive non-specific cation Piezo channel required for rapidly adapting mechanically activated (MA) currents and has a key role in sensing touch and tactile pain. Piezo channels are homotrimeric three-blade propeller-shaped structures that utilize a cap-motion and plug-and-latch mechanism to gate their ion-conducting pathways. Generates currents characterized by a linear current-voltage relationship that are sensitive to ruthenium red and gadolinium. Conductance to monovalent alkali ions is highest for K(+), intermediate for Na(+) and lowest for Li(+). Divalent ions except for Mn(2+) permeate the channel but more slowly than the monovalent ions and they also reduce K(+) currents. Plays a key role in epithelial cell adhesion by maintaining integrin activation through R-Ras recruitment to the ER, most probably in its activated state, and subsequent stimulation of calpain signaling. In inner ear hair cells, PIEZO1/2 subunits may constitute part of the mechanotransducer (MET) non-selective cation channel complex where they may act as pore-forming ion-conducting component in the complex. In the kidney, may contribute to the detection of intraluminal pressure changes and to urine flow sensing. Acts as a shear-stress sensor that promotes endothelial cell organization and alignment in the direction of blood flow through calpain activation. Plays a key role in blood vessel formation and vascular structure in both development and adult physiology. Acts as a sensor of phosphatidylserine (PS) flipping at the plasma membrane and governs morphogenesis of muscle cells. In myoblasts, flippase-mediated PS enrichment at the inner leaflet of plasma membrane triggers channel activation and Ca(2+) influx followed by Rho GTPases signal transduction, leading to assembly of cortical actomyosin fibers and myotube formation. This chain is Piezo-type mechanosensitive ion channel component 1, found in Mus musculus (Mouse).